Reading from the N-terminus, the 848-residue chain is Crooked neck-like protein 1 (848 aa).

T2 carries the N-acetylalanine modification. A disordered region spans residues 81–106; it reads RSSRTPHSTRCRKEDAQPGHHGNGAA. 17 HAT repeats span residues 222–254, 256–288, 290–322, 324–355, 357–388, 390–425, 427–461, 471–503, 505–539, 549–585, 587–618, 620–652, 654–688, 690–721, 726–767, 769–807, and 809–834; these read DYKL…WEES, KEIQ…MEMK, RQVN…MEEM, GNVA…FELR, KEVD…FEEK, AYFA…FEEN, KEFE…FEKK, IIVS…LVES, AEAE…LWIN, KDPE…FEIR, KNLS…LELQ, REFD…LETI, GDID…FEIE, EETE…FELS, GSLT…EFGT, SDKE…YIFP, and DAAN…EKED. The interval 411-628 is mediates interaction with HSP90; the sequence is MDEHLYVAFA…LREFDRCRKL (218 aa). Phosphoserine is present on S503. The interval 827–848 is disordered; the sequence is KQQQEKEDAEHHPDEDVDESES. Residues 828–840 show a composition bias toward basic and acidic residues; the sequence is QQQEKEDAEHHPD.

Belongs to the crooked-neck family. Identified in the spliceosome C complex. Present in a spliceosome complex assembled in vitro containing CRNKL1, HPRP8BP and SNRPB2. Component of the minor spliceosome, which splices U12-type introns. Isoform 2 seems to be predominant in the spliceosome complex. Interacts with PPIL2 (via the PPIase cyclophilin-type domain); they may form a trimeric complex with HSP90. As to expression, widely expressed. Highly expressed in testis. Not detected in brain and lung.

It localises to the nucleus. The protein resides in the nucleus speckle. Functionally, involved in pre-mRNA splicing process. As a component of the minor spliceosome, involved in the splicing of U12-type introns in pre-mRNAs. The chain is Crooked neck-like protein 1 (CRNKL1) from Homo sapiens (Human).